We begin with the raw amino-acid sequence, 283 residues long: MITVAVPNKGRLHEPALKLLERAGIGVEEPLGRRLKARTTDPDIEVMFVRAADIPRLVEEGVAQLGITGYDLIVEAGAEVKELLDLRFGRARLVLAVPEESDVKSPEDLDGGTVATEFPNIARQYFEDVGVDVEIIQVSGATEIMPRIGVADAIVDLCSTGTTLKVNRLRVVDELLETSARLIANPDATDGEVIRRVYLSLKGVLNADGKCLVMMNVPRERLEEFHELLPGVTGPTVSEIYGDEDMVEVYAVVNEEDVSEVVLRAKELGAEGIIVLPIERMIP.

The protein belongs to the ATP phosphoribosyltransferase family. Long subfamily. Requires Mg(2+) as cofactor.

Its subcellular location is the cytoplasm. The enzyme catalyses 1-(5-phospho-beta-D-ribosyl)-ATP + diphosphate = 5-phospho-alpha-D-ribose 1-diphosphate + ATP. Its pathway is amino-acid biosynthesis; L-histidine biosynthesis; L-histidine from 5-phospho-alpha-D-ribose 1-diphosphate: step 1/9. Feedback inhibited by histidine. In terms of biological role, catalyzes the condensation of ATP and 5-phosphoribose 1-diphosphate to form N'-(5'-phosphoribosyl)-ATP (PR-ATP). Has a crucial role in the pathway because the rate of histidine biosynthesis seems to be controlled primarily by regulation of HisG enzymatic activity. The polypeptide is ATP phosphoribosyltransferase (Methanopyrus kandleri (strain AV19 / DSM 6324 / JCM 9639 / NBRC 100938)).